Reading from the N-terminus, the 67-residue chain is Spiniferin (67 aa).

The first 23 residues, 1–23 (MKTQLAILLITLVLFQMFSQSDA), serve as a signal peptide directing secretion. At Leu-36 the chain carries Leucine amide. A propeptide spanning residues 40-67 (GLNDLSDLDELFDGEISKADLDFLREIM) is cleaved from the precursor.

It belongs to the non-disulfide-bridged peptide (NDBP) superfamily. Short antimicrobial peptide (group 4) family. Expressed by the venom gland.

It is found in the secreted. The protein resides in the target cell membrane. Functionally, alpha-helical and amphipathic peptide with weak antimicrobial activities against both Gram-positive (MIC=41 uM to &gt;82 uM) and Gram-negative (MIC&gt;82 uM) bacteria. It has extremely weak hemolytic activity against human erythrocytes. The chain is Spiniferin from Heterometrus spinifer (Asia giant forest scorpion).